Consider the following 317-residue polypeptide: 2,3,4,5-tetrahydropyridine-2,6-dicarboxylate N-succinyltransferase (317 aa).

Asp166 and Glu183 together coordinate Mg(2+). The active-site Acyl-anhydride intermediate is Glu199. Residues Arg201, Gly216, Ser219, Ala242, 257-258 (EA), Gly265, Lys277, and 290-293 (RRNS) each bind succinyl-CoA.

Belongs to the type 2 tetrahydrodipicolinate N-succinyltransferase family. Homotrimer.

Its subcellular location is the cytoplasm. The enzyme catalyses (S)-2,3,4,5-tetrahydrodipicolinate + succinyl-CoA + H2O = (S)-2-succinylamino-6-oxoheptanedioate + CoA. It participates in amino-acid biosynthesis; L-lysine biosynthesis via DAP pathway; LL-2,6-diaminopimelate from (S)-tetrahydrodipicolinate (succinylase route): step 1/3. In terms of biological role, catalyzes the conversion of the cyclic tetrahydrodipicolinate (THDP) into the acyclic N-succinyl-L-2-amino-6-oxopimelate using succinyl-CoA. This Mycobacterium tuberculosis (strain CDC 1551 / Oshkosh) protein is 2,3,4,5-tetrahydropyridine-2,6-dicarboxylate N-succinyltransferase (dapD).